The chain runs to 130 residues: Small ribosomal subunit protein uS8 (130 aa).

The protein belongs to the universal ribosomal protein uS8 family. As to quaternary structure, part of the 30S ribosomal subunit. Contacts proteins S5 and S12.

In terms of biological role, one of the primary rRNA binding proteins, it binds directly to 16S rRNA central domain where it helps coordinate assembly of the platform of the 30S subunit. The sequence is that of Small ribosomal subunit protein uS8 from Alteromonas mediterranea (strain DSM 17117 / CIP 110805 / LMG 28347 / Deep ecotype).